The following is a 411-amino-acid chain: Serine--tRNA ligase (411 aa).

Position 226–228 (226–228 (TSE)) interacts with L-serine. 257–259 (RKE) contacts ATP. L-serine is bound at residue E280. 344–347 (EISS) lines the ATP pocket. S379 lines the L-serine pocket.

It belongs to the class-II aminoacyl-tRNA synthetase family. Type-1 seryl-tRNA synthetase subfamily. In terms of assembly, homodimer. The tRNA molecule binds across the dimer.

Its subcellular location is the cytoplasm. It catalyses the reaction tRNA(Ser) + L-serine + ATP = L-seryl-tRNA(Ser) + AMP + diphosphate + H(+). The enzyme catalyses tRNA(Sec) + L-serine + ATP = L-seryl-tRNA(Sec) + AMP + diphosphate + H(+). It participates in aminoacyl-tRNA biosynthesis; selenocysteinyl-tRNA(Sec) biosynthesis; L-seryl-tRNA(Sec) from L-serine and tRNA(Sec): step 1/1. Catalyzes the attachment of serine to tRNA(Ser). Is also able to aminoacylate tRNA(Sec) with serine, to form the misacylated tRNA L-seryl-tRNA(Sec), which will be further converted into selenocysteinyl-tRNA(Sec). This Campylobacter jejuni subsp. jejuni serotype O:6 (strain 81116 / NCTC 11828) protein is Serine--tRNA ligase.